We begin with the raw amino-acid sequence, 161 residues long: MELNKNYLTQEGFKQLEKELENLIQVKRPEIIRLLQEARDQGDLSENADYDAAKAQQGEIETRIAEIQDILANAKLISDHQAKTKVTKVSLGSTVEIYDYSSKSNEKYTIVGTLEANPEEHKISNESPLALAIYGRLIGDECDVVGIEVPYRVKILKISNR.

Residues 8–28 (LTQEGFKQLEKELENLIQVKR) are a coiled coil.

This sequence belongs to the GreA/GreB family.

Functionally, necessary for efficient RNA polymerase transcription elongation past template-encoded arresting sites. The arresting sites in DNA have the property of trapping a certain fraction of elongating RNA polymerases that pass through, resulting in locked ternary complexes. Cleavage of the nascent transcript by cleavage factors such as GreA or GreB allows the resumption of elongation from the new 3'terminus. GreA releases sequences of 2 to 3 nucleotides. The chain is Transcription elongation factor GreA from Mycoplasma genitalium (strain ATCC 33530 / DSM 19775 / NCTC 10195 / G37) (Mycoplasmoides genitalium).